The following is a 582-amino-acid chain: tRNA-guanine(15) transglycosylase (582 aa).

Asp95 serves as the catalytic Nucleophile. The substrate site is built by Asp130 and Gly196. Positions 279, 281, and 284 each coordinate Zn(2+). A PUA domain is found at 507-582; that stretch reads RMRVVVNKEA…RAVKVRKGVE (76 aa).

The protein belongs to the archaeosine tRNA-ribosyltransferase family. In terms of assembly, homodimer. Zn(2+) is required as a cofactor.

It catalyses the reaction guanosine(15) in tRNA + 7-cyano-7-deazaguanine = 7-cyano-7-carbaguanosine(15) in tRNA + guanine. The protein operates within tRNA modification; archaeosine-tRNA biosynthesis. Its function is as follows. Exchanges the guanine residue with 7-cyano-7-deazaguanine (preQ0) at position 15 in the dihydrouridine loop (D-loop) of archaeal tRNAs. This chain is tRNA-guanine(15) transglycosylase (tgtA), found in Pyrococcus horikoshii (strain ATCC 700860 / DSM 12428 / JCM 9974 / NBRC 100139 / OT-3).